The chain runs to 717 residues: Fatty acid oxidation complex subunit alpha (717 aa).

The segment at 1-189 (MIYQSPTIEV…KVGAIDAVVA (189 aa)) is enoyl-CoA hydratase/isomerase. Residue Asp-296 coordinates substrate. The 3-hydroxyacyl-CoA dehydrogenase stretch occupies residues 311–717 (KKVNSAAVLG…ANNGSYYQQA (407 aa)). Residues Met-324, Asp-343, 400–402 (VVE), Lys-407, and Ser-429 contribute to the NAD(+) site. Catalysis depends on His-450, which acts as the For 3-hydroxyacyl-CoA dehydrogenase activity. Residue Asn-453 participates in NAD(+) binding. Positions 500 and 660 each coordinate substrate.

The protein in the N-terminal section; belongs to the enoyl-CoA hydratase/isomerase family. It in the C-terminal section; belongs to the 3-hydroxyacyl-CoA dehydrogenase family. In terms of assembly, heterotetramer of two alpha chains (FadB) and two beta chains (FadA).

It carries out the reaction a (3S)-3-hydroxyacyl-CoA + NAD(+) = a 3-oxoacyl-CoA + NADH + H(+). The enzyme catalyses a (3S)-3-hydroxyacyl-CoA = a (2E)-enoyl-CoA + H2O. It catalyses the reaction a 4-saturated-(3S)-3-hydroxyacyl-CoA = a (3E)-enoyl-CoA + H2O. The catalysed reaction is (3S)-3-hydroxybutanoyl-CoA = (3R)-3-hydroxybutanoyl-CoA. It carries out the reaction a (3Z)-enoyl-CoA = a 4-saturated (2E)-enoyl-CoA. The enzyme catalyses a (3E)-enoyl-CoA = a 4-saturated (2E)-enoyl-CoA. It participates in lipid metabolism; fatty acid beta-oxidation. Its function is as follows. Involved in the aerobic and anaerobic degradation of long-chain fatty acids via beta-oxidation cycle. Catalyzes the formation of 3-oxoacyl-CoA from enoyl-CoA via L-3-hydroxyacyl-CoA. It can also use D-3-hydroxyacyl-CoA and cis-3-enoyl-CoA as substrate. The chain is Fatty acid oxidation complex subunit alpha from Shewanella pealeana (strain ATCC 700345 / ANG-SQ1).